The sequence spans 174 residues: Dehydratase AgnL8 (174 aa).

3 residues coordinate substrate: Y24, Y44, and F47. Active-site residues include H79 and H104.

It belongs to the scytalone dehydratase family. As to quaternary structure, homotrimer. Each subunit contains an active site, located in the central part of the hydrophobic core of the monomer, which functions independently.

It participates in secondary metabolite biosynthesis. Functionally, dehydratase; part of the gene cluster that mediates the biosynthesis of agnestins, dihydroxy-xanthone metabolites. The pathway begins with the assembly and cyclization of atrochrysone thioester by the non-reducing polyketide synthase Agnpks1. The atrochrysone carboxyl ACP thioesterase AgnL7 then breaks the thioester bond and releases the atrochrysone carboxylic acid as the first enzyme-free intermediate. The decarboxylase AgnL1 then catalyzes the concerted decarboxylation-elimination required to convert atochrysone carboxylic acid into emodin anthrone, which is further oxidized to emodin by the anthrone oxygenase AgnL2. Emodin then undergoes reduction catalyzed by the oxidoreductase AgnL4 to yield the dihydroquinone tautomer which is the substrate for reduction by the short chain dehydrogenase AgnL6 reduction to produce hydroxyketone, followed by AgnL8 dehydration and likely spontaneous autoxidation to chrysophanol. Baeyer-Villiger oxidation by the oxidase AgnL3 leads to monodictyphenone via cleavage of the C-10/C-10a bond of chrysophanol. Alternative cleavage at the C-4a/C-10 bond of chrysophanol also leads to the formation some cephalone F. Further conversion to agnestins A and B, requires reduction to dihydro-monodictyphenone, oxidation to agnestin C probably via an epoxide, and rearrangement to either agnestin A or agnestin B directly, although agnestin A or agnestin B can also interconvert. Within the cluster, AgnR1 is the only unassigned oxidoreductase present which could be involved in this conversion. However, AgnR1 seems not to be involved in this step, and thus genes involved in the proposed oxidation/reduction may be located elsewhere on the genome. Further agnestin A derivatives are probably formed by spontaneous decarboxylations, dehydrations and methanolysis reactions. In Paecilomyces divaricatus (Penicillium divaricatum), this protein is Dehydratase AgnL8.